Reading from the N-terminus, the 393-residue chain is Formate-dependent phosphoribosylglycinamide formyltransferase (393 aa).

N(1)-(5-phospho-beta-D-ribosyl)glycinamide is bound by residues 22–23 (EL) and Glu82. ATP is bound by residues Arg114, Lys155, 160-165 (SSGKGQ), 195-198 (EGFI), and Glu203. The ATP-grasp domain maps to 119–308 (RLAAEELGLP…EFALHARAIL (190 aa)). Positions 267 and 279 each coordinate Mg(2+). Residues Asp286, Lys356, and 363–364 (RR) each bind N(1)-(5-phospho-beta-D-ribosyl)glycinamide.

Belongs to the PurK/PurT family. Homodimer.

The enzyme catalyses N(1)-(5-phospho-beta-D-ribosyl)glycinamide + formate + ATP = N(2)-formyl-N(1)-(5-phospho-beta-D-ribosyl)glycinamide + ADP + phosphate + H(+). Its pathway is purine metabolism; IMP biosynthesis via de novo pathway; N(2)-formyl-N(1)-(5-phospho-D-ribosyl)glycinamide from N(1)-(5-phospho-D-ribosyl)glycinamide (formate route): step 1/1. Functionally, involved in the de novo purine biosynthesis. Catalyzes the transfer of formate to 5-phospho-ribosyl-glycinamide (GAR), producing 5-phospho-ribosyl-N-formylglycinamide (FGAR). Formate is provided by PurU via hydrolysis of 10-formyl-tetrahydrofolate. This is Formate-dependent phosphoribosylglycinamide formyltransferase from Stutzerimonas stutzeri (strain A1501) (Pseudomonas stutzeri).